A 638-amino-acid chain; its full sequence is ABC transporter G family member 12 (638 aa).

The interval 42 to 61 (KQEKAKKKNDTESSTGDMNT) is disordered. The ABC transporter domain maps to 58–301 (DMNTGVSTTI…SLGYPCPNNT (244 aa)). 91-98 (GPSGSGKS) lines the ATP pocket. Positions 374–633 (GNFVARVGTA…WTSYLALHFL (260 aa)) constitute an ABC transmembrane type-2 domain. 7 helical membrane-spanning segments follow: residues 376 to 396 (FVAR…CFAG), 410 to 430 (TIFF…SLFL), 459 to 479 (TLIV…FAHL), 484 to 504 (GHFF…DFMI), 516 to 536 (MTFA…GFYV), 544 to 564 (SFGW…LVVN), and 612 to 632 (FGVV…ALHF).

Belongs to the ABC transporter superfamily. ABCG family. Eye pigment precursor importer (TC 3.A.1.204) subfamily.

The protein resides in the membrane. The polypeptide is ABC transporter G family member 12 (abcG12) (Dictyostelium discoideum (Social amoeba)).